A 522-amino-acid polypeptide reads, in one-letter code: Peptide chain release factor 3 (522 aa).

A tr-type G domain is found at 9 to 276 (KKRRTFAIIS…SFVNLAPAPQ (268 aa)). Residues 18 to 25 (SHPDAGKT), 86 to 90 (DTPGH), and 140 to 143 (NKLD) contribute to the GTP site.

It belongs to the TRAFAC class translation factor GTPase superfamily. Classic translation factor GTPase family. PrfC subfamily.

The protein resides in the cytoplasm. In terms of biological role, increases the formation of ribosomal termination complexes and stimulates activities of RF-1 and RF-2. It binds guanine nucleotides and has strong preference for UGA stop codons. It may interact directly with the ribosome. The stimulation of RF-1 and RF-2 is significantly reduced by GTP and GDP, but not by GMP. The sequence is that of Peptide chain release factor 3 from Lactobacillus gasseri (strain ATCC 33323 / DSM 20243 / BCRC 14619 / CIP 102991 / JCM 1131 / KCTC 3163 / NCIMB 11718 / NCTC 13722 / AM63).